A 262-amino-acid chain; its full sequence is Glucosamine-6-phosphate deaminase (262 aa).

The Proton acceptor; for enolization step role is filled by aspartate 63. The active-site For ring-opening step is asparagine 129. Residue histidine 131 is the Proton acceptor; for ring-opening step of the active site. Glutamate 136 serves as the catalytic For ring-opening step.

The protein belongs to the glucosamine/galactosamine-6-phosphate isomerase family. NagB subfamily.

The catalysed reaction is alpha-D-glucosamine 6-phosphate + H2O = beta-D-fructose 6-phosphate + NH4(+). Its pathway is amino-sugar metabolism; N-acetylneuraminate degradation; D-fructose 6-phosphate from N-acetylneuraminate: step 5/5. Its function is as follows. Catalyzes the reversible isomerization-deamination of glucosamine 6-phosphate (GlcN6P) to form fructose 6-phosphate (Fru6P) and ammonium ion. The chain is Glucosamine-6-phosphate deaminase from Bacillus cereus (strain B4264).